We begin with the raw amino-acid sequence, 641 residues long: Pumilio homolog 24 (641 aa).

The segment at 1–82 is disordered; sequence MSSKGLKPQK…LTEARKKKRK (82 aa). Positions 9–404 constitute a PUM-HD domain; it reads QKSTKRKDTD…RPLLQLLHPN (396 aa). 2 stretches are compositionally biased toward basic and acidic residues: residues 14 to 27 and 67 to 76; these read RKDTDSSAKFDSLK and RVQAKELTEA. 5 Pumilio repeats span residues 118-153, 154-189, 190-225, 303-340, and 341-378; these read KMKGKVPEIAVSHVSSRVLQTCVKFCSQAEKDVLFT, ELQPQFLNLASNKYAVHFIQKMLDGASKQQLAACIS, SLRGHVAPLLRHVFGSLVVEHAYHLGSAAQKQELLA, QLLTGSLLLRMVHTRDGSRLAMLSIKHGSAKERKKIIK, and AMKEHVKKMAFDQFGSMVLACIFSIVDDTKLVTKIIVR. Residues 427 to 468 form a disordered region; it reads MDKSETSSKTKDTDGNEIGEETKDEQEDTVAEHSDHEENVTA. Basic and acidic residues predominate over residues 428–440; that stretch reads DKSETSSKTKDTD. Positions 441-455 are enriched in acidic residues; that stretch reads GNEIGEETKDEQEDT. Over residues 456-468 the composition is skewed to basic and acidic residues; the sequence is VAEHSDHEENVTA.

The protein resides in the nucleus. The protein localises to the nucleolus. Sequence-specific RNA-binding protein that regulates translation and mRNA stability by binding the 3'-UTR of target mRNAs. The sequence is that of Pumilio homolog 24 (APUM24) from Arabidopsis thaliana (Mouse-ear cress).